The sequence spans 466 residues: tRNA-2-methylthio-N(6)-dimethylallyladenosine synthase (466 aa).

Residues 3–123 (KKLYIKTYGC…LPEMVARAVR (121 aa)) enclose the MTTase N-terminal domain. 6 residues coordinate [4Fe-4S] cluster: cysteine 12, cysteine 48, cysteine 86, cysteine 162, cysteine 166, and cysteine 169. Positions 148–381 (SPAGPSAFLS…QQLLTAQQTA (234 aa)) constitute a Radical SAM core domain. Residues 384–446 (TACVGRVQPV…ANSLSGTVVV (63 aa)) form the TRAM domain.

This sequence belongs to the methylthiotransferase family. MiaB subfamily. Monomer. It depends on [4Fe-4S] cluster as a cofactor.

The protein resides in the cytoplasm. The catalysed reaction is N(6)-dimethylallyladenosine(37) in tRNA + (sulfur carrier)-SH + AH2 + 2 S-adenosyl-L-methionine = 2-methylsulfanyl-N(6)-dimethylallyladenosine(37) in tRNA + (sulfur carrier)-H + 5'-deoxyadenosine + L-methionine + A + S-adenosyl-L-homocysteine + 2 H(+). In terms of biological role, catalyzes the methylthiolation of N6-(dimethylallyl)adenosine (i(6)A), leading to the formation of 2-methylthio-N6-(dimethylallyl)adenosine (ms(2)i(6)A) at position 37 in tRNAs that read codons beginning with uridine. This is tRNA-2-methylthio-N(6)-dimethylallyladenosine synthase from Rhodospirillum centenum (strain ATCC 51521 / SW).